The following is a 457-amino-acid chain: Siroheme synthase (457 aa).

Residues 1 to 204 (MDHLPIFCQL…NDQKAITETT (204 aa)) form a precorrin-2 dehydrogenase /sirohydrochlorin ferrochelatase region. NAD(+) is bound by residues 22-23 (DV) and 43-44 (LA). The residue at position 128 (Ser128) is a Phosphoserine. The tract at residues 216-457 (GEVVLVGAGP…RDKLNWFSNH (242 aa)) is uroporphyrinogen-III C-methyltransferase. Pro225 serves as a coordination point for S-adenosyl-L-methionine. Residue Asp248 is the Proton acceptor of the active site. Residue Lys270 is the Proton donor of the active site. Residues 301-303 (GGD), Ile306, 331-332 (TA), Met382, and Gly411 contribute to the S-adenosyl-L-methionine site.

The protein in the N-terminal section; belongs to the precorrin-2 dehydrogenase / sirohydrochlorin ferrochelatase family. This sequence in the C-terminal section; belongs to the precorrin methyltransferase family.

The catalysed reaction is uroporphyrinogen III + 2 S-adenosyl-L-methionine = precorrin-2 + 2 S-adenosyl-L-homocysteine + H(+). It catalyses the reaction precorrin-2 + NAD(+) = sirohydrochlorin + NADH + 2 H(+). The enzyme catalyses siroheme + 2 H(+) = sirohydrochlorin + Fe(2+). The protein operates within cofactor biosynthesis; adenosylcobalamin biosynthesis; precorrin-2 from uroporphyrinogen III: step 1/1. It participates in cofactor biosynthesis; adenosylcobalamin biosynthesis; sirohydrochlorin from precorrin-2: step 1/1. It functions in the pathway porphyrin-containing compound metabolism; siroheme biosynthesis; precorrin-2 from uroporphyrinogen III: step 1/1. Its pathway is porphyrin-containing compound metabolism; siroheme biosynthesis; siroheme from sirohydrochlorin: step 1/1. The protein operates within porphyrin-containing compound metabolism; siroheme biosynthesis; sirohydrochlorin from precorrin-2: step 1/1. Functionally, multifunctional enzyme that catalyzes the SAM-dependent methylations of uroporphyrinogen III at position C-2 and C-7 to form precorrin-2 via precorrin-1. Then it catalyzes the NAD-dependent ring dehydrogenation of precorrin-2 to yield sirohydrochlorin. Finally, it catalyzes the ferrochelation of sirohydrochlorin to yield siroheme. The protein is Siroheme synthase of Escherichia coli O6:K15:H31 (strain 536 / UPEC).